Consider the following 203-residue polypeptide: Superoxide dismutase [Mn] (203 aa).

Mn(2+) contacts are provided by histidine 27, histidine 81, aspartate 164, and histidine 168.

The protein belongs to the iron/manganese superoxide dismutase family. As to quaternary structure, homodimer. Mn(2+) serves as cofactor.

It catalyses the reaction 2 superoxide + 2 H(+) = H2O2 + O2. In terms of biological role, destroys superoxide anion radicals which are normally produced within the cells and which are toxic to biological systems. The polypeptide is Superoxide dismutase [Mn] (sodA) (Pseudomonas putida (Arthrobacter siderocapsulatus)).